Consider the following 205-residue polypeptide: Molybdenum cofactor guanylyltransferase (205 aa).

GTP is bound by residues Leu14–Gly16, Lys27, Asp77, and Asp107. Position 107 (Asp107) interacts with Mg(2+).

The protein belongs to the MobA family. Monomer. It depends on Mg(2+) as a cofactor.

It is found in the cytoplasm. It catalyses the reaction Mo-molybdopterin + GTP + H(+) = Mo-molybdopterin guanine dinucleotide + diphosphate. Functionally, transfers a GMP moiety from GTP to Mo-molybdopterin (Mo-MPT) cofactor (Moco or molybdenum cofactor) to form Mo-molybdopterin guanine dinucleotide (Mo-MGD) cofactor. The protein is Molybdenum cofactor guanylyltransferase of Burkholderia ambifaria (strain ATCC BAA-244 / DSM 16087 / CCUG 44356 / LMG 19182 / AMMD) (Burkholderia cepacia (strain AMMD)).